Here is a 180-residue protein sequence, read N- to C-terminus: Endoribonuclease YbeY (180 aa).

Zn(2+) contacts are provided by His118, His122, and His128.

This sequence belongs to the endoribonuclease YbeY family. It depends on Zn(2+) as a cofactor.

It is found in the cytoplasm. Functionally, single strand-specific metallo-endoribonuclease involved in late-stage 70S ribosome quality control and in maturation of the 3' terminus of the 16S rRNA. The protein is Endoribonuclease YbeY of Rhodococcus jostii (strain RHA1).